The following is a 210-amino-acid chain: NADH dehydrogenase [ubiquinone] iron-sulfur protein 8, mitochondrial (210 aa).

The transit peptide at 1-34 (MRCLTMPTLLRALAQAAHTGPPGGRTLHSSAVAA) directs the protein to the mitochondrion. 4Fe-4S ferredoxin-type domains follow at residues 102–131 (RRYPSGEERCIACKLCEAVCPAQAITIEAE) and 141–170 (TRYDIDMTKCIYCGFCQEACPVDAIVEGPN). Residues Cys111, Cys114, Cys117, Cys121, Cys150, Cys153, Cys156, and Cys160 each contribute to the [4Fe-4S] cluster site.

It belongs to the complex I 23 kDa subunit family. In terms of assembly, core subunit of respiratory chain NADH dehydrogenase (Complex I) which is composed of 45 different subunits. This is a component of the iron-sulfur (IP) fragment of the enzyme. Interacts with RAB5IF. It depends on [4Fe-4S] cluster as a cofactor.

Its subcellular location is the mitochondrion inner membrane. It catalyses the reaction a ubiquinone + NADH + 5 H(+)(in) = a ubiquinol + NAD(+) + 4 H(+)(out). In terms of biological role, core subunit of the mitochondrial membrane respiratory chain NADH dehydrogenase (Complex I) which catalyzes electron transfer from NADH through the respiratory chain, using ubiquinone as an electron acceptor. Essential for the catalytic activity and assembly of complex I. The polypeptide is NADH dehydrogenase [ubiquinone] iron-sulfur protein 8, mitochondrial (NDUFS8) (Macaca fascicularis (Crab-eating macaque)).